Consider the following 184-residue polypeptide: RNA polymerase sigma factor HrpL (184 aa).

The Polymerase core binding signature appears at 49-62 (DILQCVFLEALRNE). A DNA-binding region (H-T-H motif) is located at residues 151–170 (YQETANTLGVPIGTVRSRLS).

It belongs to the sigma-70 factor family. ECF subfamily.

Sigma factors are initiation factors that promote the attachment of RNA polymerase to specific initiation sites and are then released. This sigma factor is involved in the activation of hprD as well as other hrp loci which are involved in plant pathogenicity, hrmA and avr genes. This is RNA polymerase sigma factor HrpL (hrpL) from Pseudomonas syringae pv. syringae.